We begin with the raw amino-acid sequence, 490 residues long: Glucose-6-phosphate 1-dehydrogenase (490 aa).

NADP(+) is bound by residues Arg-49, 91–92, and Lys-146; that span reads DV. Positions 176, 180, 214, and 233 each coordinate substrate. His-238 serves as the catalytic Proton acceptor. Residues Lys-338 and Lys-343 each coordinate substrate.

Belongs to the glucose-6-phosphate dehydrogenase family.

The enzyme catalyses D-glucose 6-phosphate + NADP(+) = 6-phospho-D-glucono-1,5-lactone + NADPH + H(+). The protein operates within carbohydrate degradation; pentose phosphate pathway; D-ribulose 5-phosphate from D-glucose 6-phosphate (oxidative stage): step 1/3. Catalyzes the oxidation of glucose 6-phosphate to 6-phosphogluconolactone. The protein is Glucose-6-phosphate 1-dehydrogenase of Buchnera aphidicola subsp. Schizaphis graminum (strain Sg).